Consider the following 506-residue polypeptide: WD repeat-containing protein 55 homolog (506 aa).

The span at 1–11 shows a compositional bias: basic and acidic residues; sequence MHRHDCFKTPA. Disordered regions lie at residues 1–20, 33–87, and 100–132; these read MHRH…DDID, QEVL…SDDS, and AKRR…DEDD. Residues 33-48 show a composition bias toward acidic residues; that stretch reads QEVLNESESDDDEYDL. The span at 61 to 74 shows a compositional bias: low complexity; the sequence is GNISSNESISSDGS. The span at 78-87 shows a compositional bias: acidic residues; the sequence is NAEDTDSDDS. WD repeat units lie at residues 156-195, 200-239, 243-281, 284-323, 326-365, and 410-449; these read RLED…NKLL, VHAK…LKKL, AHDD…AIFE, EVED…LYVQ, PYEE…YHCD, and QHNM…DFGD. Residues 480-506 are disordered; that stretch reads DMTKEQDDDDNDDGGNNTTAAGSNNVT. Low complexity predominate over residues 493 to 506; that stretch reads GGNNTTAAGSNNVT.

It belongs to the WD repeat WDR55 family.

The polypeptide is WD repeat-containing protein 55 homolog (Drosophila mojavensis (Fruit fly)).